The chain runs to 436 residues: Adenylosuccinate synthetase (436 aa).

Residues 12–18 (GDEGKGK) and 40–42 (GHT) each bind GTP. Aspartate 13 serves as the catalytic Proton acceptor. 2 residues coordinate Mg(2+): aspartate 13 and glycine 40. Residues 13 to 16 (DEGK), 38 to 41 (NAGH), threonine 128, arginine 142, glutamine 223, threonine 238, and arginine 302 each bind IMP. Catalysis depends on histidine 41, which acts as the Proton donor. A substrate-binding site is contributed by 298-304 (TTTGRRR). GTP contacts are provided by residues arginine 304, 330–332 (KLD), and 412–414 (SLG).

The protein belongs to the adenylosuccinate synthetase family. In terms of assembly, homodimer. It depends on Mg(2+) as a cofactor.

The protein localises to the cytoplasm. It carries out the reaction IMP + L-aspartate + GTP = N(6)-(1,2-dicarboxyethyl)-AMP + GDP + phosphate + 2 H(+). It functions in the pathway purine metabolism; AMP biosynthesis via de novo pathway; AMP from IMP: step 1/2. Its function is as follows. Plays an important role in the de novo pathway of purine nucleotide biosynthesis. Catalyzes the first committed step in the biosynthesis of AMP from IMP. The polypeptide is Adenylosuccinate synthetase (Prochlorococcus marinus (strain MIT 9215)).